A 949-amino-acid chain; its full sequence is Bifunctional uridylyltransferase/uridylyl-removing enzyme (949 aa).

The tract at residues 1–37 (MKETSFWGETPSLSFADDTDKPLSDRTASPPCDPASS) is disordered. Residues 1-395 (MKETSFWGET…TTGEPPKVVP (395 aa)) form a uridylyltransferase region. The tract at residues 396–756 (GPEEFQTIAG…AYPIPERGVT (361 aa)) is uridylyl-removing. The 117-residue stretch at 516 to 632 (VDEHIVEAVR…LDLADTIQSP (117 aa)) folds into the HD domain. 2 consecutive ACT domains span residues 757-834 (ELTV…LDIR) and 870-949 (VIEV…TPAS).

It belongs to the GlnD family. Mg(2+) serves as cofactor.

It catalyses the reaction [protein-PII]-L-tyrosine + UTP = [protein-PII]-uridylyl-L-tyrosine + diphosphate. The enzyme catalyses [protein-PII]-uridylyl-L-tyrosine + H2O = [protein-PII]-L-tyrosine + UMP + H(+). Uridylyltransferase (UTase) activity is inhibited by glutamine, while glutamine activates uridylyl-removing (UR) activity. Functionally, modifies, by uridylylation and deuridylylation, the PII regulatory proteins (GlnB and homologs), in response to the nitrogen status of the cell that GlnD senses through the glutamine level. Under low glutamine levels, catalyzes the conversion of the PII proteins and UTP to PII-UMP and PPi, while under higher glutamine levels, GlnD hydrolyzes PII-UMP to PII and UMP (deuridylylation). Thus, controls uridylylation state and activity of the PII proteins, and plays an important role in the regulation of nitrogen assimilation and metabolism. In Gluconobacter oxydans (strain 621H) (Gluconobacter suboxydans), this protein is Bifunctional uridylyltransferase/uridylyl-removing enzyme.